Reading from the N-terminus, the 67-residue chain is MPYHYLFLALFTYLATSNVVSGSTQACLPVGPRKNGMNVNFYKYSLLDSTTYSYPQYMTSGYASNWN.

The protein belongs to the flocculin family.

This is an uncharacterized protein from Saccharomyces cerevisiae (strain ATCC 204508 / S288c) (Baker's yeast).